Here is a 1266-residue protein sequence, read N- to C-terminus: MRRLPGILLLTGAALVVIAALLVSGLRIALPHLDAWRPEILNKIESATGMPVEASQLSASWQNFGPTLEAHDIRAELKDGGEFSVKRVTLALDVWQSLLHMRWQFRDLTFWQLRFRTNTPITSGGSDDSLEASHISDLFLRQFDHFDLRDSEVSFLTPSGQRAELAIPQLTWLNDPRRHRAEGLVSLSSLTGQHGVMQVRMDLRDDEGLLSNGRVWLQADDIDLKPWLGKWMQDNIALETAQFSLEGWMTIDKGDVTGGDVWLKQGGASWLGEKQTHTLSVDNLTAHITRENPGWQFSIPDTRITMDGKPWPSGALTLAWIPEQDVGGKDNKRSDELRIRASNLELAGLEGIRPLAAKLSPALGDVWRSTQPSGKINTLALDIPLQAADKTRFQASWSDLAWKQWKLLPGAEHFSGTLSGSVENGLLTASMKQAKMPYETVFRAPLEIADGQATISWLNNNKGFQLDGRNIDVKAKAVHARGGFRYLQPANDEPWLGILAGISTDDGSQAWRYFPENLMGKDLVDYLSGAIQGGEADNATLVYGGNPQLFPYKHNEGQFEVLVPLRNAKFAFQPDWPALTNLDIELDFINDGLWMKTDGVNLGGVRASNLTAVIPDYSKEKLLIDADIKGPGKAVGPYFDETPLKDSLGATLQELQLDGDVNARLHLDIPLNGELVTAKGEVTLRNNSLFIKPLDSTLKNLSGKFSFINSDLQSEPLTASWFNQPLNVDFSTKEGAKAYQVAVNLNGNWQPAKTGVLPEAVNEALSGSVAWDGKVGIDLPYHAGATYNIELNGDLKNVSSHLPSPLAKPAGEPLAVNVKVDGNLNSFELTGQAGADNHFNSRWLLGQKLTLDRAIWAADSKTLPPLPEQSGVELNMPPMNGAEWLALFQKGAAESVGGAASFPQHITLRTPMLSLGNQQWNNLSIVSQPTANGTLVEAQGREINATLAMRNNAPWLANIKYLYYNPSVAKTRGDSTPSSPFPTTERINFRGWPDAQIRCTECWFWGQKFGRIDSDITISGDTLTLTNGLIDTGFSRLTADGEWVNNPGNERTSLKGKLRGQKIDAAAEFFGVTTPIRQSSFNVDYDLHWRKAPWQPDEATLNGIIHTQLGKGEITEINTGHAGQLLRLLSVDALMRKLRFDFRDTFGEGFYFDSIRSTAWIKDGVMHTDDTLVDGLEADIAMKGSVNLVRRDLNMEAVVAPEISATVGVAAAFAVNPIVGAAVFAASKVLGPLWSKVSILRYHISGPLDDPQINEVLRQPRKEKAQ.

Over 1 to 5 (MRRLP) the chain is Cytoplasmic. Residues 6 to 26 (GILLLTGAALVVIAALLVSGL) traverse the membrane as a helical segment. Residues 27–1266 (RIALPHLDAW…LRQPRKEKAQ (1240 aa)) are Periplasmic-facing. The P-helix stretch occupies residues 94–103 (VWQSLLHMRW). A C-helix_2 region spans residues 1121–1144 (HAGQLLRLLSVDALMRKLRFDFRD). The segment at 1203 to 1237 (ISATVGVAAAFAVNPIVGAAVFAASKVLGPLWSKV) is C-helix_1.

The protein resides in the cell inner membrane. Its function is as follows. Involved in outer membrane lipid homeostasis. Likely transports phospholipids between the inner membrane and the outer membrane. It would provide a bridge-like structure that protects phospholipids as they travel across the periplasm. The phosphate-containing molecules are captured along the length of a hydrophobic groove that is continuous along all but the extreme N-terminus of the protein. It also appears to control, directly or indirectly, levels of cyclic enterobacterial common antigen (cyclic ECA), a soluble cyclic ECA molecule present in the periplasm. TamB, YdbH and YhdP are redundant, but not equivalent, in performing an essential function for growth and maintaining lipid homeostasis in the outer membrane. The transport functions of TamB and YhdP could be differentiated according to the fatty acid saturation state of the phospholipids, with TamB transporting more unsaturated phospholipids and YhdP more saturated phospholipids. Any of these three proteins is sufficient for growth. The protein is Intermembrane phospholipid transporter YhdP (yhdP) of Escherichia coli (strain K12).